Reading from the N-terminus, the 427-residue chain is 3-phosphoshikimate 1-carboxyvinyltransferase (427 aa).

Residues Lys-23, Ser-24, and Arg-28 each coordinate 3-phosphoshikimate. Lys-23 lines the phosphoenolpyruvate pocket. Residues Gly-97 and Arg-125 each coordinate phosphoenolpyruvate. Positions 170, 171, 172, 198, 314, 337, and 341 each coordinate 3-phosphoshikimate. Gln-172 serves as a coordination point for phosphoenolpyruvate. The active-site Proton acceptor is Asp-314. Phosphoenolpyruvate is bound by residues Arg-345, Arg-387, and Lys-412.

Belongs to the EPSP synthase family. As to quaternary structure, monomer.

Its subcellular location is the cytoplasm. It catalyses the reaction 3-phosphoshikimate + phosphoenolpyruvate = 5-O-(1-carboxyvinyl)-3-phosphoshikimate + phosphate. It participates in metabolic intermediate biosynthesis; chorismate biosynthesis; chorismate from D-erythrose 4-phosphate and phosphoenolpyruvate: step 6/7. Its function is as follows. Catalyzes the transfer of the enolpyruvyl moiety of phosphoenolpyruvate (PEP) to the 5-hydroxyl of shikimate-3-phosphate (S3P) to produce enolpyruvyl shikimate-3-phosphate and inorganic phosphate. This is 3-phosphoshikimate 1-carboxyvinyltransferase from Buchnera aphidicola subsp. Baizongia pistaciae (strain Bp).